Here is a 490-residue protein sequence, read N- to C-terminus: Arginine decarboxylase (490 aa).

An N6-(pyridoxal phosphate)lysine modification is found at K226.

It belongs to the Orn/Lys/Arg decarboxylase class-I family. Requires pyridoxal 5'-phosphate as cofactor.

It localises to the cytoplasm. It carries out the reaction L-arginine + H(+) = agmatine + CO2. The protein operates within amine and polyamine biosynthesis; agmatine biosynthesis; agmatine from L-arginine: step 1/1. Its function is as follows. Catalyzes the formation of agmatine from arginine. This Bacillus subtilis (strain 168) protein is Arginine decarboxylase (speA).